Reading from the N-terminus, the 312-residue chain is Aspartate carbamoyltransferase catalytic subunit (312 aa).

2 residues coordinate carbamoyl phosphate: arginine 55 and threonine 56. Residue lysine 83 participates in L-aspartate binding. 3 residues coordinate carbamoyl phosphate: arginine 105, histidine 138, and glutamine 141. The L-aspartate site is built by arginine 171 and arginine 225. Carbamoyl phosphate is bound by residues glycine 266 and proline 267.

It belongs to the aspartate/ornithine carbamoyltransferase superfamily. ATCase family. As to quaternary structure, heterododecamer (2C3:3R2) of six catalytic PyrB chains organized as two trimers (C3), and six regulatory PyrI chains organized as three dimers (R2).

It catalyses the reaction carbamoyl phosphate + L-aspartate = N-carbamoyl-L-aspartate + phosphate + H(+). It functions in the pathway pyrimidine metabolism; UMP biosynthesis via de novo pathway; (S)-dihydroorotate from bicarbonate: step 2/3. In terms of biological role, catalyzes the condensation of carbamoyl phosphate and aspartate to form carbamoyl aspartate and inorganic phosphate, the committed step in the de novo pyrimidine nucleotide biosynthesis pathway. The protein is Aspartate carbamoyltransferase catalytic subunit of Corynebacterium glutamicum (strain ATCC 13032 / DSM 20300 / JCM 1318 / BCRC 11384 / CCUG 27702 / LMG 3730 / NBRC 12168 / NCIMB 10025 / NRRL B-2784 / 534).